A 392-amino-acid polypeptide reads, in one-letter code: Succinate--CoA ligase [ADP-forming] subunit beta (392 aa).

An ATP-grasp domain is found at 9–248 (KGILKQFGVA…ITEEDPLEYE (240 aa)). ATP contacts are provided by residues Lys50, 57 to 59 (GRG), Glu103, Met106, and Glu111. Mg(2+) contacts are provided by Asn203 and Asp217. Substrate contacts are provided by residues Asn268 and 325–327 (GIV).

Belongs to the succinate/malate CoA ligase beta subunit family. In terms of assembly, heterotetramer of two alpha and two beta subunits. Requires Mg(2+) as cofactor.

The enzyme catalyses succinate + ATP + CoA = succinyl-CoA + ADP + phosphate. It catalyses the reaction GTP + succinate + CoA = succinyl-CoA + GDP + phosphate. The protein operates within carbohydrate metabolism; tricarboxylic acid cycle; succinate from succinyl-CoA (ligase route): step 1/1. In terms of biological role, succinyl-CoA synthetase functions in the citric acid cycle (TCA), coupling the hydrolysis of succinyl-CoA to the synthesis of either ATP or GTP and thus represents the only step of substrate-level phosphorylation in the TCA. The beta subunit provides nucleotide specificity of the enzyme and binds the substrate succinate, while the binding sites for coenzyme A and phosphate are found in the alpha subunit. This is Succinate--CoA ligase [ADP-forming] subunit beta from Chlorobaculum tepidum (strain ATCC 49652 / DSM 12025 / NBRC 103806 / TLS) (Chlorobium tepidum).